We begin with the raw amino-acid sequence, 206 residues long: Ribosomal RNA small subunit methyltransferase G (206 aa).

S-adenosyl-L-methionine-binding positions include Gly-73, Leu-78, 124-125, and Arg-139; that span reads VE.

Belongs to the methyltransferase superfamily. RNA methyltransferase RsmG family.

Its subcellular location is the cytoplasm. The enzyme catalyses guanosine(527) in 16S rRNA + S-adenosyl-L-methionine = N(7)-methylguanosine(527) in 16S rRNA + S-adenosyl-L-homocysteine. Functionally, specifically methylates the N7 position of guanine in position 527 of 16S rRNA. This is Ribosomal RNA small subunit methyltransferase G from Pectobacterium carotovorum subsp. carotovorum (strain PC1).